A 72-amino-acid chain; its full sequence is Defensin-like protein 35 (72 aa).

An N-terminal signal peptide occupies residues 1 to 22 (MASNKISFSFVLCLYMCSLLDA). Disulfide bonds link Cys-32–Cys-58, Cys-44–Cys-67, and Cys-48–Cys-69.

This sequence belongs to the DEFL family.

The protein resides in the secreted. The polypeptide is Defensin-like protein 35 (Arabidopsis thaliana (Mouse-ear cress)).